We begin with the raw amino-acid sequence, 544 residues long: Phosphoenolpyruvate carboxykinase (ATP) (544 aa).

246 to 253 serves as a coordination point for ATP; sequence GLSGTGKT.

The protein belongs to the phosphoenolpyruvate carboxykinase (ATP) family.

The enzyme catalyses oxaloacetate + ATP = phosphoenolpyruvate + ADP + CO2. The protein operates within carbohydrate biosynthesis; gluconeogenesis. The sequence is that of Phosphoenolpyruvate carboxykinase (ATP) (PCK1) from Candida glabrata (strain ATCC 2001 / BCRC 20586 / JCM 3761 / NBRC 0622 / NRRL Y-65 / CBS 138) (Yeast).